The following is a 500-amino-acid chain: MGLLVGDDLWAVVIFTAIFLLLVDLVHRRQRWTACYPPGPVPFPGLGNLLQVDFENIPYSFYKLQNRYGNVFSLQMAWKPVVVVNGLKAVRELLVTYGEDTSDRPLMPIYNHIGYGHKSKGVILAPYGPEWREQRRFSVSTLRDFGLGKKSLEQWVTEEAGHLCDAFTKEAEHPFNPSPLLSKAVSNVIASLIYARRFEYEDPFFNRMLKTLKESLGEDTGFVGEVLNAIPMLLHIPGLPDKAFPKLNSFIALVNKMLIEHDLTWDPAQPPRDLTDAFLAEVEKAKGNPESSFNDKNLRIVVIDLFMAGMVTTSTTLSWALLLMILHPDVQRRVHQEIDEVIGHVRHPEMADQARMPYTNAVIHEVQRFADIVPTNLPHMTSRDIKFQDFFIPKGTTLIPNLSSVLKDETVWEKPLRFYPEHFLDAQGHFVKHEAFMPFSAGRRSCLGEPLARMELFLFFTCLLQRFSFSVPDGQPRPSDYGIYTMPVTPEPYQLCAVAR.

S249 is subject to Phosphoserine. C446 contributes to the heme binding site.

Belongs to the cytochrome P450 family. Heme is required as a cofactor.

It localises to the endoplasmic reticulum membrane. The protein resides in the microsome membrane. It carries out the reaction an organic molecule + reduced [NADPH--hemoprotein reductase] + O2 = an alcohol + oxidized [NADPH--hemoprotein reductase] + H2O + H(+). Functionally, cytochromes P450 are a group of heme-thiolate monooxygenases. In liver microsomes, this enzyme is involved in an NADPH-dependent electron transport pathway. It oxidizes a variety of structurally unrelated compounds, including steroids, fatty acids, and xenobiotics. The polypeptide is Cytochrome P450 2D26 (Mus musculus (Mouse)).